The primary structure comprises 336 residues: Dihydroorotate dehydrogenase (quinone) (336 aa).

FMN-binding positions include 62–66 (AGLDK) and Thr-86. Lys-66 lines the substrate pocket. 111–115 (NRMGF) serves as a coordination point for substrate. 2 residues coordinate FMN: Asn-139 and Asn-172. Residue Asn-172 coordinates substrate. The Nucleophile role is filled by Ser-175. Asn-177 serves as a coordination point for substrate. Positions 217 and 245 each coordinate FMN. 246-247 (NT) contributes to the substrate binding site. Residues Gly-268, Gly-297, and 318–319 (YS) each bind FMN.

The protein belongs to the dihydroorotate dehydrogenase family. Type 2 subfamily. As to quaternary structure, monomer. The cofactor is FMN.

It localises to the cell membrane. It catalyses the reaction (S)-dihydroorotate + a quinone = orotate + a quinol. Its pathway is pyrimidine metabolism; UMP biosynthesis via de novo pathway; orotate from (S)-dihydroorotate (quinone route): step 1/1. In terms of biological role, catalyzes the conversion of dihydroorotate to orotate with quinone as electron acceptor. This is Dihydroorotate dehydrogenase (quinone) from Hamiltonella defensa subsp. Acyrthosiphon pisum (strain 5AT).